The chain runs to 122 residues: Small ribosomal subunit protein uS13 (122 aa).

Positions leucine 94 to lysine 122 are disordered. Basic residues predominate over residues glutamine 101 to lysine 122.

The protein belongs to the universal ribosomal protein uS13 family. As to quaternary structure, part of the 30S ribosomal subunit. Forms a loose heterodimer with protein S19. Forms two bridges to the 50S subunit in the 70S ribosome.

In terms of biological role, located at the top of the head of the 30S subunit, it contacts several helices of the 16S rRNA. In the 70S ribosome it contacts the 23S rRNA (bridge B1a) and protein L5 of the 50S subunit (bridge B1b), connecting the 2 subunits; these bridges are implicated in subunit movement. Contacts the tRNAs in the A and P-sites. The polypeptide is Small ribosomal subunit protein uS13 (Chlamydia trachomatis serovar A (strain ATCC VR-571B / DSM 19440 / HAR-13)).